Here is a 299-residue protein sequence, read N- to C-terminus: MAAAEEGCSVGAEADRELEELLESALDDFDKAKPSPAPPSTTTAPDASGPQKRSPGDTAKDALFASQEKFFQELFDSELASQATAEFEKAMKELAEEEPHLVEQFQKLSEAAGRVGSDMTSQQEFTSCLKETLSGLAKNATDLQNSSMSEEELTKAMEGLGMDEGDGEGNILPIMQSIMQNLLSKDVLYPSLKEITEKYPEWLQSHRESLPPEQFEKYQEQHSVMCKICEQFEAETPTDSETTQKARFEMVLDLMQQLQDLGHPPKELAGEMPPGLNFDLDALNLSGPPGASGEQCLIM.

Positions 1-63 (MAAAEEGCSV…SPGDTAKDAL (63 aa)) are disordered. Ala2 bears the N-acetylalanine mark. The tract at residues 2–56 (AAAEEGCSVGAEADRELEELLESALDDFDKAKPSPAPPSTTTAPDASGPQKRSPG) is docking to the peroxisome membrane and binding to PEX3. Positions 2-91 (AAAEEGCSVG…QATAEFEKAM (90 aa)) are necessary for PEX19 function on peroxisome biogenesis. A compositionally biased stretch (acidic residues) spans 16–27 (RELEELLESALD). Ser35, Ser54, and Ser66 each carry phosphoserine. Thr236 carries the post-translational modification Phosphothreonine. A Cysteine methyl ester modification is found at Cys296. Cys296 carries the S-farnesyl cysteine lipid modification. The propeptide at 297 to 299 (LIM) is removed in mature form.

Belongs to the peroxin-19 family. In terms of assembly, interacts with a broad range of peroxisomal membrane proteins, including PEX3, PEX10, PEX11A, PEX11B, PEX12, PEX13, PEX14 and PEX16, PXMP2/PMP22, PXMP4/PMP24, SLC25A17/PMP34, ABCD1/ALDP, ABCD2/ALDRP, and ABCD3/PMP70. Also interacts with the tumor suppressor CDKN2A/p19ARF. As to quaternary structure, (Microbial infection) Interacts with human cytomegalovirus protein UL37 isoform vMIA; this interaction inhibits the peroxisomal-dependent antiviral signaling. In terms of tissue distribution, ubiquitously expressed. Isoform 1 is strongly predominant in all tissues except in utero where isoform 2 is the main form.

It localises to the cytoplasm. The protein localises to the peroxisome membrane. In terms of biological role, necessary for early peroxisomal biogenesis. Acts both as a cytosolic chaperone and as an import receptor for peroxisomal membrane proteins (PMPs). Binds and stabilizes newly synthesized PMPs in the cytoplasm by interacting with their hydrophobic membrane-spanning domains, and targets them to the peroxisome membrane by binding to the integral membrane protein PEX3. Excludes CDKN2A from the nucleus and prevents its interaction with MDM2, which results in active degradation of TP53. The polypeptide is Peroxisomal biogenesis factor 19 (Homo sapiens (Human)).